The sequence spans 542 residues: Probable protein kinase UbiB (542 aa).

Residues 123-505 (DFDEQALASA…ADNKTYNVKM (383 aa)) enclose the Protein kinase domain. Residues 129–137 (LASASIAQV) and lysine 156 each bind ATP. The Proton acceptor role is filled by aspartate 291. A helical membrane pass occupies residues 506–526 (IIMGSIILSLLWQFNSLPLWL).

Belongs to the ABC1 family. UbiB subfamily.

Its subcellular location is the cell inner membrane. Its pathway is cofactor biosynthesis; ubiquinone biosynthesis [regulation]. In terms of biological role, is probably a protein kinase regulator of UbiI activity which is involved in aerobic coenzyme Q (ubiquinone) biosynthesis. The polypeptide is Probable protein kinase UbiB (Haemophilus ducreyi (strain 35000HP / ATCC 700724)).